Reading from the N-terminus, the 230-residue chain is Transmembrane protein 225 (230 aa).

Over 1–8 (MMHIPNRS) the chain is Cytoplasmic. The chain crosses the membrane as a helical span at residues 9-29 (IQAANIFFSSGAILLLIVGLI). The Extracellular portion of the chain corresponds to 30–71 (MEDWVELIPKVRKDKTTHSPWLGCCPPFWPEESLEVVRRIMR). Residues 72–92 (MTLNISIYLNLIIGLQFSYMI) form a helical membrane-spanning segment. At 93-99 (SQNKCVH) the chain is on the cytoplasmic side. The chain crosses the membrane as a helical span at residues 100–120 (LLVGFLSFFAGCLLFYAIIVY). Over 121–139 (HHKLNKGQYVYFVNYKTKW) the chain is Extracellular. The chain crosses the membrane as a helical span at residues 140–160 (IAFTVYLTIALFLTCGIFCFI). Residues 161 to 230 (QSTNRCECMK…TQARRVTWAL (70 aa)) lie on the Cytoplasmic side of the membrane. The RVxF motif lies at 224-228 (RRVTW).

Interacts (via RVxF motif) with PPP1CC. In terms of tissue distribution, expressed in testis, epididymis and spermatozoa (at protein level). Not expressed in brain, heart, lung, liver, spleen, kidney and skeletal muscle.

It localises to the cytoplasmic vesicle. The protein localises to the secretory vesicle. The protein resides in the acrosome membrane. Functionally, probably inhibits protein phosphatase 1 (PP1) in sperm via binding to catalytic subunit PPP1CC. The protein is Transmembrane protein 225 (Tmem225) of Mus musculus (Mouse).